A 514-amino-acid polypeptide reads, in one-letter code: Voltage-gated potassium channel regulatory subunit KCNG1 (514 aa).

Over 1 to 224 the chain is Cytoplasmic; that stretch reads MTLLPGDNSD…DMVEKPHSGL (224 aa). The span at 181–196 shows a compositional bias: acidic residues; that stretch reads EREDEEEALDSEDQES. Residues 181–205 are disordered; it reads EREDEEEALDSEDQESEGPSTSEGR. Residues 225–246 traverse the membrane as a helical segment; it reads PGKVFACLSVLFVTVTAVNLSV. The Extracellular segment spans residues 247 to 267; the sequence is STLPSLREEEEQGQCSQMCHN. Residues 268–289 form a helical membrane-spanning segment; that stretch reads VFIVESVCVGWFSLEFLLRFIQ. Topologically, residues 290 to 300 are cytoplasmic; the sequence is APSKFAFLRSP. A helical membrane pass occupies residues 301–321; it reads LTLIDLVAILPYYVTLLVDGA. Residues 322 to 338 lie on the Extracellular side of the membrane; the sequence is ASSRRKPSTGNSYLDKV. The chain crosses the membrane as a helical; Voltage-sensor span at residues 339 to 359; it reads GLVLRVLRALRILYVMRLARH. Residues 360 to 374 are Cytoplasmic-facing; it reads SLGLQTLGLTARRCT. Residues 375–396 form a helical membrane-spanning segment; it reads REFGLLLLFLCVAIALFAPLLY. Residues 397 to 411 are Extracellular-facing; it reads VIENEMADSPEFTSI. The segment at residues 412–423 is an intramembrane region (helical); sequence PACYWWAVITMT. The Selectivity filter signature appears at 424–429; the sequence is TVGYGD. An intramembrane segment occupies 424–431; that stretch reads TVGYGDMV. Over 432-438 the chain is Extracellular; it reads PRSTPGQ. The helical transmembrane segment at 439-467 threads the bilayer; it reads VVALSSILSGILLMAFPVTSIFHTFSRSY. At 468-514 the chain is on the cytoplasmic side; sequence LELKQEQERVLIRRAQYLIKTKSQLSGMSQDSDILFGSASSDTRDNN.

Belongs to the potassium channel family. G (TC 1.A.1.2) subfamily. Kv6.1/KCNG1 sub-subfamily. As to quaternary structure, heterotetramer with KCNB1 or KCNB2.

Its subcellular location is the cell membrane. Its function is as follows. Regulatory alpha-subunit of the voltage-gated potassium (Kv) channel which, when coassembled with KCNB1 or KCNB2, can modulate their expression and their gating kinetics by acting on deactivation upon repolarization and inactivation during maintained depolarization. Potassium channel subunit that does not form functional channels by itself. In Rattus norvegicus (Rat), this protein is Voltage-gated potassium channel regulatory subunit KCNG1.